The following is a 1555-amino-acid chain: UDP-glucose:glycoprotein glucosyltransferase 1 (1555 aa).

The first 42 residues, 1–42 (MGCKGDASGACAAGALPVTGVCYKMGVLVVLTVLWLFSSVKA), serve as a signal peptide directing secretion. N-linked (GlcNAc...) asparagine glycans are attached at residues asparagine 536 and asparagine 1228. The glucosyltransferase stretch occupies residues 1244–1555 (KTEEVKQDKD…REGPQKREEL (312 aa)). Residue serine 1277 is modified to Phosphoserine. Residues 1534 to 1555 (GALYKEKTKEPSREGPQKREEL) are disordered. The Prevents secretion from ER signature appears at 1552 to 1555 (REEL).

It belongs to the glycosyltransferase 8 family. In terms of assembly, monomer as well as in a tight complex with SELENOF. Interacts with METTL23. Part of a large chaperone multiprotein complex comprising DNAJB11, HSP90B1, HSPA5, HYOU, PDIA2, PDIA4, PDIA6, PPIB, SDF2L1, UGGT1 and very small amounts of ERP29, but not, or at very low levels, CALR nor CANX. Requires Ca(2+) as cofactor. The cofactor is Mn(2+). Higher levels in pancreas, skeletal muscle, kidney, and brain. Low levels in lung and heart.

Its subcellular location is the endoplasmic reticulum lumen. The protein resides in the endoplasmic reticulum-Golgi intermediate compartment. The catalysed reaction is N(4)-(alpha-D-Man-(1-&gt;2)-alpha-D-Man-(1-&gt;2)-alpha-D-Man-(1-&gt;3)-[alpha-D-Man-(1-&gt;2)-alpha-D-Man-(1-&gt;3)-[alpha-D-Man-(1-&gt;2)-alpha-D-Man-(1-&gt;6)]-alpha-D-Man-(1-&gt;6)]-beta-D-Man-(1-&gt;4)-beta-D-GlcNAc-(1-&gt;4)-beta-D-GlcNAc)-L-asparaginyl-[protein] (N-glucan mannose isomer 9A1,2,3B1,2,3) + UDP-alpha-D-glucose = N(4)-(alpha-D-Glc-(1-&gt;3)-alpha-D-Man-(1-&gt;2)-alpha-D-Man-(1-&gt;2)-alpha-D-Man-(1-&gt;3)-[alpha-D-Man-(1-&gt;2)-alpha-D-Man-(1-&gt;3)-[alpha-D-Man-(1-&gt;2)-alpha-D-Man-(1-&gt;6)]-alpha-D-Man-(1-&gt;6)]-beta-D-Man-(1-&gt;4)-beta-D-GlcNAc-(1-&gt;4)-beta-D-GlcNAc)-L-asparaginyl-[protein] + UDP + H(+). The protein operates within protein modification; protein glycosylation. With respect to regulation, catalytic activity is enhanced by complex formation with SELENOF. Its function is as follows. Recognizes glycoproteins with minor folding defects. Reglucosylates single N-glycans near the misfolded part of the protein, thus providing quality control for protein folding in the endoplasmic reticulum. Reglucosylated proteins are recognized by calreticulin for recycling to the endoplasmic reticulum and refolding or degradation. This is UDP-glucose:glycoprotein glucosyltransferase 1 (UGGT1) from Homo sapiens (Human).